The sequence spans 1235 residues: ATP-dependent helicase/nuclease subunit A (1235 aa).

Residues 3–471 (TKWTETQKSA…IKLSENFRSR (469 aa)) form the UvrD-like helicase ATP-binding domain. ATP is bound at residue 24 to 31 (AGAGTGKT). One can recognise a UvrD-like helicase C-terminal domain in the interval 509–808 (PFEGNCGGDV…RIMSIHKSKG (300 aa)).

Belongs to the helicase family. AddA subfamily. In terms of assembly, heterodimer of AddA and AddB/RexB. Mg(2+) serves as cofactor.

The catalysed reaction is Couples ATP hydrolysis with the unwinding of duplex DNA by translocating in the 3'-5' direction.. It carries out the reaction ATP + H2O = ADP + phosphate + H(+). Its function is as follows. The heterodimer acts as both an ATP-dependent DNA helicase and an ATP-dependent, dual-direction single-stranded exonuclease. Recognizes the chi site generating a DNA molecule suitable for the initiation of homologous recombination. The AddA nuclease domain is required for chi fragment generation; this subunit has the helicase and 3' -&gt; 5' nuclease activities. The protein is ATP-dependent helicase/nuclease subunit A of Clostridium kluyveri (strain ATCC 8527 / DSM 555 / NBRC 12016 / NCIMB 10680 / K1).